The following is a 293-amino-acid chain: Shikimate dehydrogenase (NADP(+)) (293 aa).

Shikimate-binding positions include 26–28 (SKS) and Thr73. Residue Lys77 is the Proton acceptor of the active site. Residue Asp89 participates in NADP(+) binding. Shikimate contacts are provided by Asn98 and Asp113. NADP(+)-binding positions include 137-141 (GAGGA), 161-166 (NRTKQR), and Ile231. Residue Tyr233 coordinates shikimate. Gly254 serves as a coordination point for NADP(+).

This sequence belongs to the shikimate dehydrogenase family. As to quaternary structure, homodimer.

The catalysed reaction is shikimate + NADP(+) = 3-dehydroshikimate + NADPH + H(+). The protein operates within metabolic intermediate biosynthesis; chorismate biosynthesis; chorismate from D-erythrose 4-phosphate and phosphoenolpyruvate: step 4/7. In terms of biological role, involved in the biosynthesis of the chorismate, which leads to the biosynthesis of aromatic amino acids. Catalyzes the reversible NADPH linked reduction of 3-dehydroshikimate (DHSA) to yield shikimate (SA). In Bartonella henselae (strain ATCC 49882 / DSM 28221 / CCUG 30454 / Houston 1) (Rochalimaea henselae), this protein is Shikimate dehydrogenase (NADP(+)).